The chain runs to 311 residues: Probable manganese-dependent inorganic pyrophosphatase (311 aa).

6 residues coordinate Mn(2+): His-9, Asp-13, Asp-15, Asp-75, His-97, and Asp-149.

It belongs to the PPase class C family. Mn(2+) is required as a cofactor.

The protein resides in the cytoplasm. The enzyme catalyses diphosphate + H2O = 2 phosphate + H(+). This is Probable manganese-dependent inorganic pyrophosphatase from Lactobacillus acidophilus (strain ATCC 700396 / NCK56 / N2 / NCFM).